The chain runs to 199 residues: Small ribosomal subunit protein uS4 (199 aa).

Positions Ser94–Leu157 constitute an S4 RNA-binding domain.

Belongs to the universal ribosomal protein uS4 family. In terms of assembly, part of the 30S ribosomal subunit. Contacts protein S5. The interaction surface between S4 and S5 is involved in control of translational fidelity.

One of the primary rRNA binding proteins, it binds directly to 16S rRNA where it nucleates assembly of the body of the 30S subunit. In terms of biological role, with S5 and S12 plays an important role in translational accuracy. The chain is Small ribosomal subunit protein uS4 from Mycoplasmopsis synoviae (strain 53) (Mycoplasma synoviae).